The following is a 418-amino-acid chain: Light-independent protochlorophyllide reductase subunit N (418 aa).

3 residues coordinate [4Fe-4S] cluster: Cys17, Cys42, and Cys103.

The protein belongs to the BchN/ChlN family. In terms of assembly, protochlorophyllide reductase is composed of three subunits; ChlL, ChlN and ChlB. Forms a heterotetramer of two ChlB and two ChlN subunits. It depends on [4Fe-4S] cluster as a cofactor.

The catalysed reaction is chlorophyllide a + oxidized 2[4Fe-4S]-[ferredoxin] + 2 ADP + 2 phosphate = protochlorophyllide a + reduced 2[4Fe-4S]-[ferredoxin] + 2 ATP + 2 H2O. The protein operates within porphyrin-containing compound metabolism; chlorophyll biosynthesis (light-independent). Component of the dark-operative protochlorophyllide reductase (DPOR) that uses Mg-ATP and reduced ferredoxin to reduce ring D of protochlorophyllide (Pchlide) to form chlorophyllide a (Chlide). This reaction is light-independent. The NB-protein (ChlN-ChlB) is the catalytic component of the complex. This is Light-independent protochlorophyllide reductase subunit N from Prochlorococcus marinus (strain MIT 9515).